A 2374-amino-acid chain; its full sequence is CCR4-NOT transcription complex subunit 1 (2374 aa).

Short sequence motifs (LXXLL) lie at residues Leu-153 to Leu-157, Leu-181 to Leu-185, Leu-223 to Leu-227, and Leu-570 to Leu-574. The span at Leu-1009–Ala-1051 shows a compositional bias: low complexity. The interval Leu-1009–Pro-1060 is disordered. The segment at Glu-1082–Thr-1604 is interaction with CCR4-NOT complex catalytic subunits. 3 short sequence motifs (LXXLL) span residues Ile-1638 to Leu-1642, Leu-1940 to Leu-1944, and Leu-2094 to Leu-2098.

It belongs to the CNOT1 family. As to quaternary structure, component of the CCR4-NOT complex.

The protein resides in the cytoplasm. It localises to the nucleus. Functionally, scaffolding component of the CCR4-NOT complex which is one of the major cellular mRNA deadenylases and is linked to various cellular processes including bulk mRNA degradation, miRNA-mediated repression, translational repression during translational initiation and general transcription regulation. Additional complex functions may be a consequence of its influence on mRNA expression. Its scaffolding function implies its interaction with the catalytic complex module and diverse RNA-binding proteins mediating the complex recruitment to selected mRNA 3'UTRs. Acts as a transcriptional repressor. Represses the ligand-dependent transcriptional activation by nuclear receptors. The protein is CCR4-NOT transcription complex subunit 1 (cnot1) of Danio rerio (Zebrafish).